A 107-amino-acid polypeptide reads, in one-letter code: V-type proton ATPase subunit G (107 aa).

It belongs to the V-ATPase G subunit family. As to quaternary structure, V-ATPase is a heteromultimeric enzyme composed of a peripheral catalytic V1 complex (components A to H) attached to an integral membrane V0 proton pore complex (components: a, c, c', c'' and d).

In terms of biological role, catalytic subunit of the peripheral V1 complex of vacuolar ATPase (V-ATPase). V-ATPase is responsible for acidifying a variety of intracellular compartments in eukaryotic cells. This Dictyostelium discoideum (Social amoeba) protein is V-type proton ATPase subunit G (atp6v1g).